Consider the following 329-residue polypeptide: Ribosomal RNA small subunit methyltransferase C (329 aa).

Belongs to the methyltransferase superfamily. RsmC family. In terms of assembly, monomer.

Its subcellular location is the cytoplasm. The catalysed reaction is guanosine(1207) in 16S rRNA + S-adenosyl-L-methionine = N(2)-methylguanosine(1207) in 16S rRNA + S-adenosyl-L-homocysteine + H(+). Specifically methylates the guanine in position 1207 of 16S rRNA in the 30S particle. The sequence is that of Ribosomal RNA small subunit methyltransferase C from Actinobacillus pleuropneumoniae serotype 7 (strain AP76).